A 340-amino-acid chain; its full sequence is tRNA N6-adenosine threonylcarbamoyltransferase (340 aa).

Positions 113 and 117 each coordinate Fe cation. Substrate contacts are provided by residues 135-139 (LVSGG), aspartate 169, glycine 182, aspartate 186, and asparagine 274. Aspartate 302 provides a ligand contact to Fe cation.

It belongs to the KAE1 / TsaD family. The cofactor is Fe(2+).

The protein localises to the cytoplasm. It catalyses the reaction L-threonylcarbamoyladenylate + adenosine(37) in tRNA = N(6)-L-threonylcarbamoyladenosine(37) in tRNA + AMP + H(+). In terms of biological role, required for the formation of a threonylcarbamoyl group on adenosine at position 37 (t(6)A37) in tRNAs that read codons beginning with adenine. Is involved in the transfer of the threonylcarbamoyl moiety of threonylcarbamoyl-AMP (TC-AMP) to the N6 group of A37, together with TsaE and TsaB. TsaD likely plays a direct catalytic role in this reaction. This is tRNA N6-adenosine threonylcarbamoyltransferase from Mycolicibacterium vanbaalenii (strain DSM 7251 / JCM 13017 / BCRC 16820 / KCTC 9966 / NRRL B-24157 / PYR-1) (Mycobacterium vanbaalenii).